The primary structure comprises 120 residues: Protein GP96 (120 aa).

The protein belongs to the herpesviridae UL96 family.

The polypeptide is Protein GP96 (Cavia porcellus (Guinea pig)).